The chain runs to 237 residues: Nodulation protein NolA (237 aa).

The HTH merR-type domain occupies 10–79; that stretch reads RWRIGELAGA…LQEIRRAMDG (70 aa). Positions 13–32 form a DNA-binding region, H-T-H motif; sequence IGELAGATGVTVRTLHHYEH.

Its function is as follows. Involved in genotype-specific nodulation of soybeans. The chain is Nodulation protein NolA (nolA) from Bradyrhizobium sp. (strain NC92).